A 560-amino-acid polypeptide reads, in one-letter code: DNA ligase B (560 aa).

Residue Lys-124 is the N6-AMP-lysine intermediate of the active site.

The protein belongs to the NAD-dependent DNA ligase family. LigB subfamily.

It carries out the reaction NAD(+) + (deoxyribonucleotide)n-3'-hydroxyl + 5'-phospho-(deoxyribonucleotide)m = (deoxyribonucleotide)n+m + AMP + beta-nicotinamide D-nucleotide.. In terms of biological role, catalyzes the formation of phosphodiester linkages between 5'-phosphoryl and 3'-hydroxyl groups in double-stranded DNA using NAD as a coenzyme and as the energy source for the reaction. This chain is DNA ligase B, found in Escherichia coli O139:H28 (strain E24377A / ETEC).